The sequence spans 322 residues: Cytochrome c biogenesis protein CcsA (322 aa).

Transmembrane regions (helical) follow at residues 15 to 35 (FSIVSIIITMRLISFFLVDGI), 45 to 65 (GMIVTFLCLTGLLVTRWTYSG), 72 to 92 (LYESLIFLSWSFSLIHIVPYF), 98 to 120 (YLSTITGSSVVFTQGFTTSGLLT), 144 to 164 (MILGYASLLCGSLLSIALLVI), 226 to 246 (GISLGFIFLTIGILSGAVWAN), 253 to 273 (WNWDPKETWAFITWIIFAIYL), and 287 to 307 (AIVASIGFLIIWICYFGVNLL).

The protein belongs to the CcmF/CycK/Ccl1/NrfE/CcsA family. May interact with Ccs1.

Its subcellular location is the plastid. The protein localises to the chloroplast thylakoid membrane. Its function is as follows. Required during biogenesis of c-type cytochromes (cytochrome c6 and cytochrome f) at the step of heme attachment. The sequence is that of Cytochrome c biogenesis protein CcsA from Coffea arabica (Arabian coffee).